We begin with the raw amino-acid sequence, 274 residues long: Bis(5'-nucleosyl)-tetraphosphatase, symmetrical (274 aa).

This sequence belongs to the Ap4A hydrolase family.

The catalysed reaction is P(1),P(4)-bis(5'-adenosyl) tetraphosphate + H2O = 2 ADP + 2 H(+). Hydrolyzes diadenosine 5',5'''-P1,P4-tetraphosphate to yield ADP. This chain is Bis(5'-nucleosyl)-tetraphosphatase, symmetrical, found in Shewanella baltica (strain OS185).